A 459-amino-acid chain; its full sequence is E3 ubiquitin-protein ligase RNF14 (459 aa).

In terms of domain architecture, RWD spans 10–129 (DELLALASIY…QFLKEETLDF (120 aa)). Residues 141–169 (SGSQPQCEPAQKHAADASGEKSKVQDLDP) form a disordered region. The span at 150 to 169 (AQKHAADASGEKSKVQDLDP) shows a compositional bias: basic and acidic residues. Positions 200-441 (KAFCCGICYS…NPDSPCYNQL (242 aa)) are TRIAD supradomain. The Zn(2+) site is built by cysteine 204, cysteine 207, cysteine 222, histidine 224, cysteine 227, cysteine 230, cysteine 249, cysteine 254, cysteine 293, cysteine 298, cysteine 313, cysteine 316, cysteine 321, cysteine 324, histidine 329, cysteine 334, cysteine 388, and cysteine 391. 2 consecutive RING-type zinc fingers follow at residues 204–249 (CGIC…CLNC) and 204–254 (CGIC…EPKC). The IBR-type zinc finger occupies 273-334 (ARYDRLLLQS…RRSYHGLSHC (62 aa)). The segment at 388–417 (CPCCGTNIQKAHGCNKMTCSSCQKYFCWIC) adopts an RING-type 2; atypical zinc-finger fold. Cysteine 401 is an active-site residue. 6 residues coordinate Zn(2+): cysteine 406, cysteine 409, cysteine 414, cysteine 417, histidine 429, and cysteine 437.

It belongs to the RBR family. RNF14 subfamily.

It localises to the cytoplasm. It is found in the nucleus. It carries out the reaction [E2 ubiquitin-conjugating enzyme]-S-ubiquitinyl-L-cysteine + [acceptor protein]-L-lysine = [E2 ubiquitin-conjugating enzyme]-L-cysteine + [acceptor protein]-N(6)-ubiquitinyl-L-lysine.. Its pathway is protein modification; protein ubiquitination. E3 ubiquitin-protein ligase that plays a key role in the RNF14-RNF25 translation quality control pathway, a pathway that takes place when a ribosome has stalled during translation, and which promotes ubiquitination and degradation of translation factors on stalled ribosomes. Recruited to stalled ribosomes by the ribosome collision sensor GCN1 and mediates 'Lys-6'-linked ubiquitination of target proteins, leading to their degradation. Mediates ubiquitination of eef1a1/eEF1A and etf1/eRF1 translation factors on stalled ribosomes, leading to their degradation. Specifically required to resolve RNA-protein cross-links caused by reactive aldehydes, which trigger translation stress by stalling ribosomes: acts by catalying 'Lys-6'-linked ubiquitination of RNA-protein cross-links, leading to their removal by the ATP-dependent unfoldase VCP and subsequent degradation by the proteasome. Independently of its function in the response to stalled ribosomes, acts as a regulator of transcription in Wnt signaling via its interaction with TCF transcription factors (tcf7/tcf1, tcf7l1/tcf3 and tcf7l2/tcf4). The sequence is that of E3 ubiquitin-protein ligase RNF14 from Danio rerio (Zebrafish).